The chain runs to 161 residues: MTGSDQTRAKLIDIELDESIGRSTPDVEHERAVAIFDLIEENSFQPVNDSGAGPYRLKLSLAEQRLVFAVAREDGTAVVTHILSLTPLRRIVKDYYMICESYYDAIRSSTPSHIEAIDMGRRGLHNEGSQTLMDRLSGKIDIDFDTARRLFTLVCVLHWRG.

It belongs to the UPF0262 family.

In Mesorhizobium japonicum (strain LMG 29417 / CECT 9101 / MAFF 303099) (Mesorhizobium loti (strain MAFF 303099)), this protein is UPF0262 protein mll6455.